We begin with the raw amino-acid sequence, 253 residues long: Ras-like protein family member 11A-like (253 aa).

GTP-binding positions include 43 to 50 (GASNVGKT), 90 to 97 (DTPCVSLQ), and 157 to 160 (NKSD). The segment at 213–233 (GNGEKRKGGLHLARPKSPNMQ) is disordered.

It belongs to the small GTPase superfamily. Ras family.

The protein resides in the nucleus. Its subcellular location is the nucleolus. It catalyses the reaction GTP + H2O = GDP + phosphate + H(+). In terms of biological role, regulator of rDNA transcription. The sequence is that of Ras-like protein family member 11A-like from Danio rerio (Zebrafish).